Here is a 239-residue protein sequence, read N- to C-terminus: tRNA1(Val) (adenine(37)-N6)-methyltransferase (239 aa).

The protein belongs to the methyltransferase superfamily. tRNA (adenine-N(6)-)-methyltransferase family.

The protein resides in the cytoplasm. It catalyses the reaction adenosine(37) in tRNA1(Val) + S-adenosyl-L-methionine = N(6)-methyladenosine(37) in tRNA1(Val) + S-adenosyl-L-homocysteine + H(+). In terms of biological role, specifically methylates the adenine in position 37 of tRNA(1)(Val) (anticodon cmo5UAC). This is tRNA1(Val) (adenine(37)-N6)-methyltransferase from Vibrio campbellii (strain ATCC BAA-1116).